The chain runs to 279 residues: MADS-box transcription factor PHERES 1 (279 aa).

Residues 1–60 (MRGKMKLSFIENDSVRKTTFTKRKKGMLKKFNELVTLCGVDACAVIRSPYNSIQEPWPSR) form the MADS-box domain.

As to quaternary structure, interacts with AGL61/DIANA and AGL62. Male gametophyte, embryo and endosperm.

It is found in the nucleus. In terms of biological role, probable transcription factor involved in the development of gametophytes and seeds. This Arabidopsis thaliana (Mouse-ear cress) protein is MADS-box transcription factor PHERES 1 (PHE1).